An 896-amino-acid chain; its full sequence is Probable DNA-directed RNA polymerase (896 aa).

Catalysis depends on residues aspartate 546, lysine 617, and aspartate 798.

The protein belongs to the phage and mitochondrial RNA polymerase family.

It is found in the mitochondrion. The catalysed reaction is RNA(n) + a ribonucleoside 5'-triphosphate = RNA(n+1) + diphosphate. Functionally, DNA-dependent RNA polymerase catalyzes the transcription of DNA into RNA using the four ribonucleoside triphosphates as substrates. In Neurospora crassa, this protein is Probable DNA-directed RNA polymerase.